The chain runs to 312 residues: tRNA dimethylallyltransferase (312 aa).

Residue 11-18 participates in ATP binding; it reads GLTATGKT. 13 to 18 serves as a coordination point for substrate; that stretch reads TATGKT. Positions 36 to 39 are interaction with substrate tRNA; it reads DSMC.

The protein belongs to the IPP transferase family. As to quaternary structure, monomer. Mg(2+) is required as a cofactor.

The enzyme catalyses adenosine(37) in tRNA + dimethylallyl diphosphate = N(6)-dimethylallyladenosine(37) in tRNA + diphosphate. Catalyzes the transfer of a dimethylallyl group onto the adenine at position 37 in tRNAs that read codons beginning with uridine, leading to the formation of N6-(dimethylallyl)adenosine (i(6)A). The sequence is that of tRNA dimethylallyltransferase from Caldicellulosiruptor bescii (strain ATCC BAA-1888 / DSM 6725 / KCTC 15123 / Z-1320) (Anaerocellum thermophilum).